Consider the following 114-residue polypeptide: MSLRSERVGEQLKKEISEIINQKLKNPNVGFVTVTEVEVTGDLSLASVYVTVLGEEKERKKSLEGLEKSKGFIKSEIAHRMDLRIVPDLKFKYDESIDYGNKIERMIAELNRDK.

Belongs to the RbfA family. Monomer. Binds 30S ribosomal subunits, but not 50S ribosomal subunits or 70S ribosomes.

It localises to the cytoplasm. Functionally, one of several proteins that assist in the late maturation steps of the functional core of the 30S ribosomal subunit. Associates with free 30S ribosomal subunits (but not with 30S subunits that are part of 70S ribosomes or polysomes). Required for efficient processing of 16S rRNA. May interact with the 5'-terminal helix region of 16S rRNA. In Macrococcus caseolyticus (strain JCSC5402) (Macrococcoides caseolyticum), this protein is Ribosome-binding factor A.